Here is a 194-residue protein sequence, read N- to C-terminus: Imidazoleglycerol-phosphate dehydratase (194 aa).

This sequence belongs to the imidazoleglycerol-phosphate dehydratase family.

The protein resides in the cytoplasm. The catalysed reaction is D-erythro-1-(imidazol-4-yl)glycerol 3-phosphate = 3-(imidazol-4-yl)-2-oxopropyl phosphate + H2O. It participates in amino-acid biosynthesis; L-histidine biosynthesis; L-histidine from 5-phospho-alpha-D-ribose 1-diphosphate: step 6/9. This chain is Imidazoleglycerol-phosphate dehydratase, found in Bacillus cereus (strain G9842).